A 314-amino-acid chain; its full sequence is 2,3-dihydroxyphenylpropionate/2,3-dihydroxicinnamic acid 1,2-dioxygenase (314 aa).

The Proton donor role is filled by His-115. His-179 (proton acceptor) is an active-site residue.

It belongs to the LigB/MhpB extradiol dioxygenase family. As to quaternary structure, homotetramer. Fe(2+) serves as cofactor.

The catalysed reaction is 3-(2,3-dihydroxyphenyl)propanoate + O2 = (2Z,4E)-2-hydroxy-6-oxonona-2,4-dienedioate + H(+). It carries out the reaction (2E)-3-(2,3-dihydroxyphenyl)prop-2-enoate + O2 = (2Z,4E,7E)-2-hydroxy-6-oxonona-2,4,7-trienedioate + H(+). It functions in the pathway aromatic compound metabolism; 3-phenylpropanoate degradation. Its function is as follows. Catalyzes the non-heme iron(II)-dependent oxidative cleavage of 2,3-dihydroxyphenylpropionic acid and 2,3-dihydroxicinnamic acid into 2-hydroxy-6-ketononadienedioate and 2-hydroxy-6-ketononatrienedioate, respectively. This is 2,3-dihydroxyphenylpropionate/2,3-dihydroxicinnamic acid 1,2-dioxygenase from Rhodococcus jostii (strain RHA1).